A 546-amino-acid polypeptide reads, in one-letter code: MGQKRKDLSHAELMMMTIADIIKQLIEAHEQGKDVNLNKLKTKTSAKYGLSAQPRLVDIIAAVPPQHRKALVPKLKAKPIRTASGIAVVAVMCKPHRCPHINFTGNICVYCPGGPDSDFEYSTQSYTGYEPTSMRAIRARYDPYLQTRHRVEQLKQLGHSVDKVEFIVMGGTFMALPEDYRDYFIRNLHDALSGHTSNNVAEAVKYSERSLTKCVGITIETRPDYCLKRHLSDMLSYGCTRLEIGVQSVYEDVARDTNRGHTVKAVCESFHLAKDAGFKVVAHMMPDLPNMGLERDTDQFVEFFENPAFRPDGMKLYPTLVIRGTGLYELWKTGRYKSYPPSTLVDLVARILALVPPWTRVYRVQRDIPMPLVSSGVEHGNLRELALARMKDLGTQCRDVRTREVGIQEIHHKVRPYQIELIRRDYVANGGWETFLSYEDPEQDILVGLLRLRKCSEESFRPELKGGVSIVRELHVYGSVVPVSSRDPSKFQHQGFGMLLMEEAERIAKEEHGSWKIAVISGVGTRNYYRKIGYELEGPYMVKRLQ.

One can recognise a Radical SAM core domain in the interval 81 to 371 (RTASGIAVVA…YRVQRDIPMP (291 aa)). [4Fe-4S] cluster contacts are provided by Cys98, Cys108, and Cys111. Acetyl-CoA contacts are provided by residues Lys163, 473–476 (ELHV), 496–498 (FGM), and Tyr529. The region spanning 395-546 (TQCRDVRTRE…EGPYMVKRLQ (152 aa)) is the N-acetyltransferase domain.

It belongs to the ELP3 family. In terms of assembly, component of the elongator complex. [4Fe-4S] cluster is required as a cofactor.

It is found in the cytoplasm. The protein localises to the nucleus. The catalysed reaction is uridine(34) in tRNA + acetyl-CoA + S-adenosyl-L-methionine + H2O = 5-(carboxymethyl)uridine(34) in tRNA + 5'-deoxyadenosine + L-methionine + CoA + 2 H(+). It participates in tRNA modification; 5-methoxycarbonylmethyl-2-thiouridine-tRNA biosynthesis. Its function is as follows. Catalytic tRNA acetyltransferase subunit of the elongator complex which is required for multiple tRNA modifications, including mcm5U (5-methoxycarbonylmethyl uridine), mcm5s2U (5-methoxycarbonylmethyl-2-thiouridine), and ncm5U (5-carbamoylmethyl uridine). In the elongator complex, acts as a tRNA uridine(34) acetyltransferase by mediating formation of carboxymethyluridine in the wobble base at position 34 in tRNAs. This is Elongator complex protein 3 from Gallus gallus (Chicken).